A 925-amino-acid chain; its full sequence is Aspulvinone E synthetase melA (925 aa).

The adenylation (A) domain stretch occupies residues 11-434; the sequence is ETAAARNGDG…GGRAKETIII (424 aa). The Carrier domain occupies 564–644; it reads SPKNDFEKGL…ELAAALDNLY (81 aa). Serine 601 is subject to O-(pantetheine 4'-phosphoryl)serine. A thioesterase (TE) domain region spans residues 663-923; that stretch reads PLWLVHPGAG…KILRSALAER (261 aa).

This sequence belongs to the ATP-dependent AMP-binding enzyme family.

The protein resides in the cytoplasm. In terms of biological role, nonribosomal peptide synthase; part of the gene cluster that mediates the biosynthesis of Asp-melanin, a pigment that confers resistance against UV light and hampers phagocytosis by soil amoeba. The nonribosomal peptide synthase melA converts 4-hydroxyphenylpyruvate (4-HPPA) to aspulvinone E. The tyrosinase tyrP then performs hydroxylations of both aromatic moieties of aspulvinone E. The product of tyrP is highly unstable, and, due to the high reactivity of methides and ortho-diquinones, the polymeric Asp-melanin forms spontaneously. The protein is Aspulvinone E synthetase melA of Aspergillus terreus.